The primary structure comprises 230 residues: Ubiquitin carboxyl-terminal hydrolase isozyme L3 (230 aa).

The 225-residue stretch at 5 to 229 (RWLPLEANPE…LRFNAIALSA (225 aa)) folds into the UCH catalytic domain. Positions 8-13 (PLEANP) are interaction with ubiquitin. Residue cysteine 95 is the Nucleophile of the active site. Serine 130 bears the Phosphoserine mark. The interval 152-159 (AHEGQTEA) is interaction with ubiquitin. Crossover loop which restricts access of large ubiquitin adducts to the active site. Residue histidine 169 is the Proton donor of the active site. An interaction with ubiquitin region spans residues 219-224 (ELRFNA).

This sequence belongs to the peptidase C12 family. Preferentially binds diubiquitin; the interaction does not hydrolyze diubiquitin but, in vitro, inhibits the hydrolyzing activity on other substrates.

It is found in the cytoplasm. It carries out the reaction Thiol-dependent hydrolysis of ester, thioester, amide, peptide and isopeptide bonds formed by the C-terminal Gly of ubiquitin (a 76-residue protein attached to proteins as an intracellular targeting signal).. Its activity is regulated as follows. Inhibited by monoubiquitin and diubiquitin. Functionally, deubiquitinating enzyme (DUB) that controls levels of cellular ubiquitin through processing of ubiquitin precursors and ubiquitinated proteins. Thiol protease that recognizes and hydrolyzes a peptide bond at the C-terminal glycine of either ubiquitin or NEDD8. Has a 10-fold preference for Arg and Lys at position P3, and exhibits a preference towards 'Lys-48'-linked ubiquitin chains. Deubiquitinates ENAC in apical compartments, thereby regulating apical membrane recycling. Indirectly increases the phosphorylation of IGFIR, AKT and FOXO1 and promotes insulin-signaling and insulin-induced adipogenesis. Required for stress-response retinal, skeletal muscle and germ cell maintenance. May be involved in working memory. Can hydrolyze UBB(+1), a mutated form of ubiquitin which is not effectively degraded by the proteasome. The protein is Ubiquitin carboxyl-terminal hydrolase isozyme L3 (UCHL3) of Sus scrofa (Pig).